We begin with the raw amino-acid sequence, 128 residues long: Small ribosomal subunit protein uS11m (128 aa).

It belongs to the universal ribosomal protein uS11 family.

The protein localises to the mitochondrion. The sequence is that of Small ribosomal subunit protein uS11m (RPS11) from Prototheca wickerhamii.